The following is a 256-amino-acid chain: Pimeloyl-[acyl-carrier protein] methyl ester esterase (256 aa).

Positions 15–242 constitute an AB hydrolase-1 domain; the sequence is HLVLLHGWGL…AAHAPFISHP (228 aa). Substrate contacts are provided by residues Trp-22, 82–83, and 143–147; these read SL and FLALQ. The active-site Nucleophile is the Ser-82. Residues Asp-207 and His-235 contribute to the active site. His-235 contributes to the substrate binding site.

Belongs to the AB hydrolase superfamily. Carboxylesterase BioH family. In terms of assembly, monomer.

The protein resides in the cytoplasm. The catalysed reaction is 6-carboxyhexanoyl-[ACP] methyl ester + H2O = 6-carboxyhexanoyl-[ACP] + methanol + H(+). It functions in the pathway cofactor biosynthesis; biotin biosynthesis. Functionally, the physiological role of BioH is to remove the methyl group introduced by BioC when the pimeloyl moiety is complete. It allows to synthesize pimeloyl-ACP via the fatty acid synthetic pathway through the hydrolysis of the ester bonds of pimeloyl-ACP esters. The chain is Pimeloyl-[acyl-carrier protein] methyl ester esterase from Escherichia coli (strain SMS-3-5 / SECEC).